We begin with the raw amino-acid sequence, 156 residues long: Small ribosomal subunit protein uS7 (156 aa).

Belongs to the universal ribosomal protein uS7 family. In terms of assembly, part of the 30S ribosomal subunit. Contacts proteins S9 and S11.

One of the primary rRNA binding proteins, it binds directly to 16S rRNA where it nucleates assembly of the head domain of the 30S subunit. Is located at the subunit interface close to the decoding center, probably blocks exit of the E-site tRNA. In Syntrophomonas wolfei subsp. wolfei (strain DSM 2245B / Goettingen), this protein is Small ribosomal subunit protein uS7.